Reading from the N-terminus, the 156-residue chain is Small ribosomal subunit protein eS10 (156 aa).

A disordered region spans residues 91–156 (LKRQTRPEAA…FGRGRQEQEE (66 aa)). Positions 95–119 (TRPEAARPRPKEGAPRAQVGEDRAG) are enriched in basic and acidic residues.

The protein belongs to the eukaryotic ribosomal protein eS10 family.

It localises to the cytoplasm. This is Small ribosomal subunit protein eS10 (RPS10) from Lumbricus rubellus (Humus earthworm).